The chain runs to 137 residues: Large ribosomal subunit protein uL16 (137 aa).

It belongs to the universal ribosomal protein uL16 family. As to quaternary structure, part of the 50S ribosomal subunit.

Its function is as follows. Binds 23S rRNA and is also seen to make contacts with the A and possibly P site tRNAs. The sequence is that of Large ribosomal subunit protein uL16 from Halorhodospira halophila (strain DSM 244 / SL1) (Ectothiorhodospira halophila (strain DSM 244 / SL1)).